The chain runs to 376 residues: Homocitrate synthase (376 aa).

In terms of domain architecture, Pyruvate carboxyltransferase spans 4–259 (WKIIDSTLRE…RRKYKLEMLP (256 aa)). Arg-12 is a 2-oxoglutarate binding site. Glu-13 is a Mg(2+) binding site. His-72 provides a ligand contact to 2-oxoglutarate. Asp-92 is an L-lysine binding site. Residue Arg-133 coordinates 2-oxoglutarate. The L-lysine site is built by Ser-135 and Thr-166. Thr-166 provides a ligand contact to 2-oxoglutarate. 2 residues coordinate Mg(2+): His-195 and His-197. The active-site Proton acceptor is His-292.

This sequence belongs to the alpha-IPM synthase/homocitrate synthase family. Homocitrate synthase LYS20/LYS21 subfamily. As to quaternary structure, exists in an equilibrium between monomer and homodimer. Mg(2+) is required as a cofactor. Mn(2+) serves as cofactor.

Its subcellular location is the cytoplasm. It carries out the reaction acetyl-CoA + 2-oxoglutarate + H2O = (2R)-homocitrate + CoA + H(+). The catalysed reaction is oxaloacetate + acetyl-CoA + H2O = citrate + CoA + H(+). It participates in amino-acid biosynthesis; L-lysine biosynthesis via AAA pathway; L-alpha-aminoadipate from 2-oxoglutarate: step 1/5. With respect to regulation, is highly and competitively inhibited by lysine that binds to the active site and competes with 2-oxoglutarate. Is also slightly inhibited by arginine and 2-aminoethylcysteine. Functionally, catalyzes the aldol-type condensation of 2-oxoglutarate with acetyl-CoA to yield homocitrate. Carries out the first step of the alpha-aminoadipate (AAA) lysine biosynthesis pathway. To a lesser extent, can also use oxaloacetate in place of 2-oxoglutarate, leading to citrate. Does not display 2-isopropylmalate synthase activity since it cannot use 2-oxoisovalerate. The sequence is that of Homocitrate synthase from Thermus thermophilus (strain ATCC BAA-163 / DSM 7039 / HB27).